The following is a 422-amino-acid chain: Replication factor C large subunit (422 aa).

Position 63 to 70 (63 to 70) interacts with ATP; it reads GPPGVGKT.

It belongs to the activator 1 small subunits family. RfcL subfamily. In terms of assembly, heteromultimer composed of small subunits (RfcS) and large subunits (RfcL).

Functionally, part of the RFC clamp loader complex which loads the PCNA sliding clamp onto DNA. This chain is Replication factor C large subunit, found in Pyrobaculum aerophilum (strain ATCC 51768 / DSM 7523 / JCM 9630 / CIP 104966 / NBRC 100827 / IM2).